A 576-amino-acid chain; its full sequence is Low-affinity glucose transporter HXT4 (576 aa).

The tract at residues 1–56 (MSEEAAYQEDTAVQNTPADALSPVESDSNSALSTPSNKAERDDMKDFDENHEESNN) is disordered. The Cytoplasmic portion of the chain corresponds to 1–66 (MSEEAAYQED…YVEIPKKPAS (66 aa)). Residues 25–37 (ESDSNSALSTPSN) show a composition bias toward polar residues. A compositionally biased stretch (basic and acidic residues) spans 38–54 (KAERDDMKDFDENHEES). A Glycyl lysine isopeptide (Lys-Gly) (interchain with G-Cter in ubiquitin) cross-link involves residue K45. A helical transmembrane segment spans residues 67–87 (AYVTVSICCLMVAFGGFVFGW). Residues 88-122 (DTGTISGFVAQTDFIRRFGMKHHDGTYYLSKVRTG) are Extracellular-facing. A helical membrane pass occupies residues 123–143 (LIVSIFNIGCAIGGIILAKLG). Topologically, residues 144 to 149 (DMYGRK) are cytoplasmic. The chain crosses the membrane as a helical span at residues 150–170 (MGLIVVVVIYIIGIIIQIASI). Topologically, residues 171 to 180 (NKWYQYFIGR) are extracellular. The helical transmembrane segment at 181 to 201 (IISGLGVGGIAVLSPMLISEV) threads the bilayer. At 202–207 (SPKHIR) the chain is on the cytoplasmic side. Residues 208–228 (GTLVSCYQLMITLGIFLGYCT) form a helical membrane-spanning segment. Topologically, residues 229–242 (NYGTKTYTNSVQWR) are extracellular. The helical transmembrane segment at 243–263 (VPLGLGFAWALFMIGGMTFVP) threads the bilayer. Topologically, residues 264–346 (ESPRYLVEVG…IQSLQQLTGD (83 aa)) are cytoplasmic. Residues 347–363 (NYFFYYGTTVFTAVGLE) traverse the membrane as a helical segment. At 364–369 (DSFETS) the chain is on the extracellular side. The chain crosses the membrane as a helical span at residues 370–387 (IVLGIVNFASTFVGIFLV). Over 388–394 (ERYGRRR) the chain is Cytoplasmic. The helical transmembrane segment at 395–415 (CLLWGAASMTACMVVFASVGV) threads the bilayer. At 416 to 437 (TRLWPNGKKNGSSKGAGNCMIV) the chain is on the extracellular side. N-linked (GlcNAc...) asparagine glycosylation occurs at N425. The helical transmembrane segment at 438–458 (FTCFYLFCFATTWAPIPFVVN) threads the bilayer. Over 459-475 (SETFPLRVKSKCMAIAQ) the chain is Cytoplasmic. The helical transmembrane segment at 476–496 (ACNWIWGFLIGFFTPFISGAI) threads the bilayer. D497 is a topological domain (extracellular). A helical membrane pass occupies residues 498–518 (FYYGYVFMGCLVFSYFYVFFF). At 519–576 (VPETKGLTLEEVNTLWEEGVLPWKSPSWVPPNKRGTDYNADDLMHDDQPFYKKMFGKK) the chain is on the cytoplasmic side.

It belongs to the major facilitator superfamily. Sugar transporter (TC 2.A.1.1) family.

The protein resides in the cell membrane. Its activity is regulated as follows. Xylose uptake is strongly inhibited by glucose. In terms of biological role, low-affinity glucose transporter. Can also transport xylose. This chain is Low-affinity glucose transporter HXT4 (HXT4), found in Saccharomyces cerevisiae (strain ATCC 204508 / S288c) (Baker's yeast).